The following is a 505-amino-acid chain: Flagellin (505 aa).

The protein belongs to the bacterial flagellin family.

It is found in the secreted. The protein resides in the bacterial flagellum. Flagellin is the subunit protein which polymerizes to form the filaments of bacterial flagella. The protein is Flagellin (fliC) of Salmonella dublin.